The primary structure comprises 399 residues: CCA-adding enzyme (399 aa).

ATP is bound by residues Gly32 and Arg35. 2 residues coordinate CTP: Gly32 and Arg35. The Mg(2+) site is built by Asp45 and Asp47. ATP is bound by residues Arg116, Asp159, Arg162, Arg165, and Arg168. Residues Arg116, Asp159, Arg162, Arg165, and Arg168 each contribute to the CTP site.

It belongs to the tRNA nucleotidyltransferase/poly(A) polymerase family. Bacterial CCA-adding enzyme type 3 subfamily. As to quaternary structure, homodimer. It depends on Mg(2+) as a cofactor.

It catalyses the reaction a tRNA precursor + 2 CTP + ATP = a tRNA with a 3' CCA end + 3 diphosphate. The enzyme catalyses a tRNA with a 3' CCA end + 2 CTP + ATP = a tRNA with a 3' CCACCA end + 3 diphosphate. Its function is as follows. Catalyzes the addition and repair of the essential 3'-terminal CCA sequence in tRNAs without using a nucleic acid template. Adds these three nucleotides in the order of C, C, and A to the tRNA nucleotide-73, using CTP and ATP as substrates and producing inorganic pyrophosphate. tRNA 3'-terminal CCA addition is required both for tRNA processing and repair. Also involved in tRNA surveillance by mediating tandem CCA addition to generate a CCACCA at the 3' terminus of unstable tRNAs. While stable tRNAs receive only 3'-terminal CCA, unstable tRNAs are marked with CCACCA and rapidly degraded. The polypeptide is CCA-adding enzyme (Streptococcus gordonii (strain Challis / ATCC 35105 / BCRC 15272 / CH1 / DL1 / V288)).